The following is a 347-amino-acid chain: NADH-ubiquinone oxidoreductase chain 2 (347 aa).

Transmembrane regions (helical) follow at residues 1-21, 25-45, 59-79, 96-116, 122-142, 148-168, 200-220, 240-260, 274-294, and 325-345; these read MNPL…GIVM, HWLT…PILM, YFLT…INLV, IILT…FWVP, VHLP…MSVL, MINL…GGWG, MALL…LTFM, ITTI…LSGF, NSII…FFYM, and LLSP…MLML.

The protein belongs to the complex I subunit 2 family. In terms of assembly, core subunit of respiratory chain NADH dehydrogenase (Complex I) which is composed of 45 different subunits. Interacts with TMEM242.

The protein resides in the mitochondrion inner membrane. It catalyses the reaction a ubiquinone + NADH + 5 H(+)(in) = a ubiquinol + NAD(+) + 4 H(+)(out). Functionally, core subunit of the mitochondrial membrane respiratory chain NADH dehydrogenase (Complex I) which catalyzes electron transfer from NADH through the respiratory chain, using ubiquinone as an electron acceptor. Essential for the catalytic activity and assembly of complex I. The protein is NADH-ubiquinone oxidoreductase chain 2 of Thoopterus nigrescens (Swift fruit bat).